Here is a 1049-residue protein sequence, read N- to C-terminus: Vacuolar membrane protease (1049 aa).

Residues 1–11 are Cytoplasmic-facing; sequence MKCYNPSAFVP. A helical membrane pass occupies residues 12-32; it reads MAVTLVTVIIYLGVFIPLLII. Residues 33–438 lie on the Vacuolar side of the membrane; sequence QETVPSAPDD…TVFAVFKLRT (406 aa). A glycan (N-linked (GlcNAc...) asparagine) is linked at asparagine 50. A disordered region spans residues 114-135; the sequence is DAEAPESVPSPSNSNDGSAERY. An N-linked (GlcNAc...) asparagine glycan is attached at asparagine 157. Positions 221 and 233 each coordinate Zn(2+). Glutamate 267 acts as the Proton acceptor in catalysis. Residues glutamate 268, glutamate 293, and histidine 365 each coordinate Zn(2+). The chain crosses the membrane as a helical span at residues 439–459; sequence LFAWSLTLLIAAPLMLFAVSY. Topologically, residues 460–495 are cytoplasmic; the sequence is LLNRQDKFYFFAGSIKAKGPEDEPISLGGWRGAFRY. A helical transmembrane segment spans residues 496 to 516; sequence PITLIITCAITFGCASLINKI. At 517-526 the chain is on the vacuolar side; sequence NPMIVYSSPY. The chain crosses the membrane as a helical span at residues 527–547; the sequence is SVWSMSASLFFSIFWFIMAGC. Topologically, residues 548–557 are cytoplasmic; the sequence is NFVRPSALQR. Residues 558-578 traverse the membrane as a helical segment; sequence GYAFMWLFVFGWIILVAATVY. The Vacuolar segment spans residues 579–585; the sequence is EDRFKIS. A helical membrane pass occupies residues 586–606; the sequence is GGYLFVFYEAAIFLATLIAIG. The Cytoplasmic portion of the chain corresponds to 607 to 740; it reads EQFALPKKST…LPIWTWLVQY (134 aa). The tract at residues 621–686 is disordered; sequence SQLDHDGNQD…IGGGAPTQRS (66 aa). Residues 622–633 show a composition bias toward basic and acidic residues; sequence QLDHDGNQDSHH. Over residues 655-664 the composition is skewed to acidic residues; the sequence is GQEEDPEDNV. The chain crosses the membrane as a helical span at residues 741–761; the sequence is LLVGPFILIVVGQVGLFLVAA. Topologically, residues 762-773 are vacuolar; sequence LHQTGTDGSPLL. The chain crosses the membrane as a helical span at residues 774-794; it reads LPYLVVAVFSILLLLPVTPFI. The Cytoplasmic segment spans residues 795–801; the sequence is HRLTHHM. A helical transmembrane segment spans residues 802–822; it reads PTFFFLVFIGTLIYNLVAFPF. The Vacuolar portion of the chain corresponds to 823 to 1049; the sequence is SPNNRYKAYF…LVEGSKRFVV (227 aa). The N-linked (GlcNAc...) asparagine glycan is linked to asparagine 914.

This sequence belongs to the peptidase M28 family. The cofactor is Zn(2+).

It is found in the vacuole membrane. May be involved in vacuolar sorting and osmoregulation. The chain is Vacuolar membrane protease from Botryotinia fuckeliana (strain B05.10) (Noble rot fungus).